The chain runs to 379 residues: UDP-N-acetylglucosamine--N-acetylmuramyl-(pentapeptide) pyrophosphoryl-undecaprenol N-acetylglucosamine transferase (379 aa).

UDP-N-acetyl-alpha-D-glucosamine-binding positions include 19 to 21, N133, R174, S207, I261, and Q306; that span reads TGG.

This sequence belongs to the glycosyltransferase 28 family. MurG subfamily.

It is found in the cell inner membrane. The enzyme catalyses di-trans,octa-cis-undecaprenyl diphospho-N-acetyl-alpha-D-muramoyl-L-alanyl-D-glutamyl-meso-2,6-diaminopimeloyl-D-alanyl-D-alanine + UDP-N-acetyl-alpha-D-glucosamine = di-trans,octa-cis-undecaprenyl diphospho-[N-acetyl-alpha-D-glucosaminyl-(1-&gt;4)]-N-acetyl-alpha-D-muramoyl-L-alanyl-D-glutamyl-meso-2,6-diaminopimeloyl-D-alanyl-D-alanine + UDP + H(+). It functions in the pathway cell wall biogenesis; peptidoglycan biosynthesis. In terms of biological role, cell wall formation. Catalyzes the transfer of a GlcNAc subunit on undecaprenyl-pyrophosphoryl-MurNAc-pentapeptide (lipid intermediate I) to form undecaprenyl-pyrophosphoryl-MurNAc-(pentapeptide)GlcNAc (lipid intermediate II). This Porphyromonas gingivalis (strain ATCC 33277 / DSM 20709 / CIP 103683 / JCM 12257 / NCTC 11834 / 2561) protein is UDP-N-acetylglucosamine--N-acetylmuramyl-(pentapeptide) pyrophosphoryl-undecaprenol N-acetylglucosamine transferase.